A 285-amino-acid chain; its full sequence is Phosphatidylglycerol--prolipoprotein diacylglyceryl transferase (285 aa).

A run of 4 helical transmembrane segments spans residues 30-50 (LEIR…HWHI), 67-87 (LMLW…ILLY), 103-123 (WHGG…VSIV), and 129-149 (VRVM…LFLG). R150 is an a 1,2-diacyl-sn-glycero-3-phospho-(1'-sn-glycerol) binding site. 3 consecutive transmembrane segments (helical) span residues 184-204 (SQVY…SILA), 213-233 (FGVL…AVEF), and 252-272 (GQVL…LTVL).

The protein belongs to the Lgt family.

It localises to the cell inner membrane. The enzyme catalyses L-cysteinyl-[prolipoprotein] + a 1,2-diacyl-sn-glycero-3-phospho-(1'-sn-glycerol) = an S-1,2-diacyl-sn-glyceryl-L-cysteinyl-[prolipoprotein] + sn-glycerol 1-phosphate + H(+). The protein operates within protein modification; lipoprotein biosynthesis (diacylglyceryl transfer). Functionally, catalyzes the transfer of the diacylglyceryl group from phosphatidylglycerol to the sulfhydryl group of the N-terminal cysteine of a prolipoprotein, the first step in the formation of mature lipoproteins. The chain is Phosphatidylglycerol--prolipoprotein diacylglyceryl transferase from Anaplasma marginale (strain Florida).